We begin with the raw amino-acid sequence, 408 residues long: Guanine nucleotide-binding protein alpha-14 subunit (408 aa).

GTP-binding positions include 38 to 45 (HSEELEAK), 78 to 85 (GGPSSGKS), 201 to 205 (NRISK), 216 to 222 (VHSRKAT), 241 to 245 (DVGGQ), 285 to 288 (FPNF), 325 to 328 (NKVD), and Ala-380. The region spanning 70-408 (SHIKILILGG…KANSKATGLS (339 aa)) is the G-alpha domain. The interval 73–86 (KILILGGPSSGKST) is G1 motif. Ser-85 serves as a coordination point for Mg(2+). A G2 motif region spans residues 214–222 (DIVHSRKAT). Residue Thr-222 coordinates Mg(2+). The tract at residues 237 to 246 (LLMVDVGGQR) is G3 motif. Residues 321 to 328 (LLFFNKVD) form a G4 motif region. The tract at residues 378–383 (TTATNT) is G5 motif.

The protein belongs to the G-alpha family. As to quaternary structure, g proteins are composed of 3 units; alpha, beta and gamma. The alpha chain contains the guanine nucleotide binding site.

In terms of biological role, guanine nucleotide-binding proteins (G proteins) are involved as modulators or transducers in various transmembrane signaling systems. The sequence is that of Guanine nucleotide-binding protein alpha-14 subunit (gpa-14) from Caenorhabditis briggsae.